Here is a 355-residue protein sequence, read N- to C-terminus: uncharacterized protein (355 aa).

A signal peptide spans 1–27 (MESPIRTARRTLPLLIGATCLVLALTG). Cys-28 carries the N-palmitoyl cysteine lipid modification. Residue Cys-28 is the site of S-diacylglycerol cysteine attachment. Residues 33–53 (GPAQARPTPSASTSPKQAPAL) are disordered. A compositionally biased stretch (polar residues) spans 39 to 48 (PTPSASTSPK).

The protein localises to the cell membrane. This is an uncharacterized protein from Streptomyces coelicolor (strain ATCC BAA-471 / A3(2) / M145).